A 493-amino-acid chain; its full sequence is Cysteine--tRNA ligase (493 aa).

Zn(2+) is bound at residue cysteine 29. The 'HIGH' region motif lies at valine 31–histidine 41. A disordered region spans residues lysine 154–lysine 179. Residues cysteine 213, histidine 238, and glutamate 242 each contribute to the Zn(2+) site. A 'KMSKS' region motif is present at residues lysine 270–serine 274. Lysine 273 provides a ligand contact to ATP.

Belongs to the class-I aminoacyl-tRNA synthetase family. Monomer. It depends on Zn(2+) as a cofactor.

Its subcellular location is the cytoplasm. It carries out the reaction tRNA(Cys) + L-cysteine + ATP = L-cysteinyl-tRNA(Cys) + AMP + diphosphate. The protein is Cysteine--tRNA ligase of Synechococcus sp. (strain CC9605).